Here is a 518-residue protein sequence, read N- to C-terminus: Bifunctional purine biosynthesis protein PurH (518 aa).

The MGS-like domain occupies 1–144; sequence MSKRALISVS…KNHAAVTVVC (144 aa).

Belongs to the PurH family.

The enzyme catalyses (6R)-10-formyltetrahydrofolate + 5-amino-1-(5-phospho-beta-D-ribosyl)imidazole-4-carboxamide = 5-formamido-1-(5-phospho-D-ribosyl)imidazole-4-carboxamide + (6S)-5,6,7,8-tetrahydrofolate. It catalyses the reaction IMP + H2O = 5-formamido-1-(5-phospho-D-ribosyl)imidazole-4-carboxamide. It functions in the pathway purine metabolism; IMP biosynthesis via de novo pathway; 5-formamido-1-(5-phospho-D-ribosyl)imidazole-4-carboxamide from 5-amino-1-(5-phospho-D-ribosyl)imidazole-4-carboxamide (10-formyl THF route): step 1/1. Its pathway is purine metabolism; IMP biosynthesis via de novo pathway; IMP from 5-formamido-1-(5-phospho-D-ribosyl)imidazole-4-carboxamide: step 1/1. This is Bifunctional purine biosynthesis protein PurH from Lactococcus lactis subsp. cremoris (strain SK11).